Reading from the N-terminus, the 116-residue chain is Acyl-CoA-binding protein homolog 3 (116 aa).

One can recognise an ACB domain in the interval 3–92 (LQEKFDAAVE…LNDMFDKIAE (90 aa)). Residues 34 to 38 (YSLFK), Lys60, and Tyr79 contribute to the an acyl-CoA site.

Belongs to the ACBP family.

In terms of biological role, binds medium- and long-chain acyl-CoA esters with very high affinity and may function as an intracellular carrier of acyl-CoA esters. The sequence is that of Acyl-CoA-binding protein homolog 3 (acbp-3) from Caenorhabditis elegans.